The primary structure comprises 98 residues: MAATTGLETLVDQIISVITNDGRNIVGVLKGFDQATNIILDESHERVFSTKEGVQQHVLGLYIIRGDNIGVIGELDEELDASLDFSKLRAHPLKPVVH.

In terms of domain architecture, Sm spans 2–78 (AATTGLETLV…IGVIGELDEE (77 aa)).

This sequence belongs to the snRNP Sm proteins family. Component of the heptameric LSM2-LSM8 complex that forms a seven-membered ring structure with a donut shape. The LSM subunits are arranged in the order LSM8, LSM2, LSM3, LSM6, LSM5, LSM7 and LSM4. LSM8 subunit interacts only with its two neighboring subunits, LSM2 and LSM4. Interacts with the prefoldin co-chaperone subunits PFD1, PFD2, PFD3, PFD4, PFD5 and PFD6. As to expression, expressed in roots, leaves, stems, flowers and siliques.

Its subcellular location is the nucleus. Its function is as follows. Component of the nuclear LSM2-LSM8 complex which is involved splicing nuclear mRNAs. LSM2-LSM8 binds directly to the U6 small nuclear RNAs (snRNAs). LSM8 is essential for the formation of the nuclear LSM2-LSM8 complex involved in the accurate splicing of selected development-related mRNAs through the stabilization of the spliceosomal U6 snRNA. Plays a critical role in the regulation of development-related gene expression. The chain is Sm-like protein LSM8 from Arabidopsis thaliana (Mouse-ear cress).